The following is a 495-amino-acid chain: Glutamyl-tRNA(Gln) amidotransferase subunit A (495 aa).

Catalysis depends on charge relay system residues lysine 75 and serine 150. Serine 174 acts as the Acyl-ester intermediate in catalysis.

The protein belongs to the amidase family. GatA subfamily. Heterotrimer of A, B and C subunits.

The enzyme catalyses L-glutamyl-tRNA(Gln) + L-glutamine + ATP + H2O = L-glutaminyl-tRNA(Gln) + L-glutamate + ADP + phosphate + H(+). Allows the formation of correctly charged Gln-tRNA(Gln) through the transamidation of misacylated Glu-tRNA(Gln) in organisms which lack glutaminyl-tRNA synthetase. The reaction takes place in the presence of glutamine and ATP through an activated gamma-phospho-Glu-tRNA(Gln). The polypeptide is Glutamyl-tRNA(Gln) amidotransferase subunit A (Paraburkholderia xenovorans (strain LB400)).